The following is a 507-amino-acid chain: Tryptamine 4-monooxygenase (507 aa).

The signal sequence occupies residues 1-19 (MIVLLVSLVLAGCIYYANA). Residues 403 to 425 (PNPSEFRPERYLSSDGKPDPTVR) form a disordered region. The segment covering 408–425 (FRPERYLSSDGKPDPTVR) has biased composition (basic and acidic residues). Cys-439 contacts heme.

The protein belongs to the cytochrome P450 family. Requires heme as cofactor.

It carries out the reaction tryptamine + AH2 + O2 = 4-hydroxytryptamine + A + H2O. Its pathway is secondary metabolite biosynthesis. Its function is as follows. Tryptamine 4-monooxygenase; part of the gene cluster that mediates the biosynthesis of psilocybin, a psychotropic tryptamine-derived natural product. The first step in the pathway is the decarboxylation of L-tryptophan to tryptamine by the decarboxylase psiD. PsiD does not decarboxylate phenylalanine, tyrosine, or 5-hydroxy- L -tryptophan (5-HTP). 4-hydroxy-L-tryptophan is accepted as substrate by psiD as well. The cytochrome P450 monooxygenase psiH then converts tryptamine to 4-hydroxytryptamine. The kinase psiK catalyzes the 4-O-phosphorylation step by converting 4-hydroxytryptamine into norbaeocystin. The methyltransferase psiM then catalyzes iterative methyl transfer to the amino group of norbaeocystin to yield psilocybin via a monomethylated intermediate, baeocystin. The chain is Tryptamine 4-monooxygenase from Psilocybe cyanescens.